A 393-amino-acid chain; its full sequence is Yellow-related salivary protein SP03B (393 aa).

The N-terminal stretch at 1–18 (MKIFLCLIAVVFLQGVVG) is a signal peptide. A glycan (N-linked (GlcNAc...) asparagine) is linked at asparagine 29.

The protein belongs to the major royal jelly protein family. Female salivary gland (at protein level).

The protein localises to the secreted. Functionally, probably modulates blood feeding of sand flies on vertebrate species by binding and sequestering different mediators involved in the host response. Binds biogenic amines. Binds serotonin with high affinity. Poorly binds histamine. Does not bind dopamine, noradrenaline, adrenaline and octopamine. The chain is Yellow-related salivary protein SP03B from Phlebotomus perniciosus (Phlebotomine sand fly).